The sequence spans 478 residues: Alpha,alpha-trehalose-phosphate synthase [UDP-forming] (478 aa).

The D-glucose 6-phosphate site is built by tyrosine 89 and aspartate 143. Residues arginine 280 and lysine 285 each contribute to the UDP site. UDP-alpha-D-glucose is bound by residues arginine 280 and lysine 285. Residue arginine 318 participates in D-glucose 6-phosphate binding. UDP is bound by residues isoleucine 357 and 383–387; that span reads LVSYE. UDP-alpha-D-glucose is bound by residues isoleucine 357 and 379 to 387; that span reads DGMNLVSYE.

The protein belongs to the glycosyltransferase 20 family.

The catalysed reaction is D-glucose 6-phosphate + UDP-alpha-D-glucose = alpha,alpha-trehalose 6-phosphate + UDP + H(+). The protein operates within carbohydrate biosynthesis. With respect to regulation, inhibited by validoxylamine A, a non-reactive trehalose analog. Synthase catalytic subunit of the trehalose synthase complex that catalyzes the production of trehalose from glucose-6-phosphate and UDP-alpha-D-glucose in a two step process. The protein is Alpha,alpha-trehalose-phosphate synthase [UDP-forming] of Candida albicans (strain SC5314 / ATCC MYA-2876) (Yeast).